The chain runs to 904 residues: Pantothenate kinase 2 (904 aa).

Residues 1 to 56 form a disordered region; it reads MAANNNSDPILDEGGGGGVKHEAVGEAGEGKGGGGGAAATQAPAAMLPRSGSRPQL. The interval 1–472 is pantothenate kinase; the sequence is MAANNNSDPI…LGDLNEKISW (472 aa). A 4'-phosphopantetheine phosphatase region spans residues 473–904; that stretch reads MEKFVQKGTQ…DCICKFEPVP (432 aa). Residues aspartate 735, asparagine 736, and aspartate 771 each coordinate Mn(2+). The short motif at 855 to 859 is the Subfamily II EGMGR motif element; the sequence is EGMGR.

The protein in the N-terminal section; belongs to the type II pantothenate kinase family. It in the C-terminal section; belongs to the damage-control phosphatase family. Phosphopantetheine phosphatase II subfamily. Mn(2+) is required as a cofactor. Requires Ni(2+) as cofactor.

The catalysed reaction is (R)-pantothenate + ATP = (R)-4'-phosphopantothenate + ADP + H(+). It catalyses the reaction (R)-4'-phosphopantothenate + H2O = (R)-pantothenate + phosphate. It carries out the reaction (R)-4'-phosphopantetheine + H2O = (R)-pantetheine + phosphate. The enzyme catalyses (R)-4'-phosphopantetheine sulfonate + H2O = (R)-pantetheine sulfonate + phosphate. The protein operates within cofactor biosynthesis; coenzyme A biosynthesis; CoA from (R)-pantothenate: step 1/5. In terms of biological role, catalyzes the phosphorylation of pantothenate the first step in CoA biosynthesis. May play a role in the physiological regulation of the intracellular CoA concentration. Functionally redudant with PANK1. The phosphatase activity shows preference for normal or oxidatively damaged intermediates of 4'-phosphopantetheine, which provides strong indirect evidence that the phosphatase activity pre-empts damage in the CoA pathway. Hydrolyzing excess 4'-phosphopantetheine could constitute a directed overflow mechanism to prevent its oxidation to the S-sulfonate, sulfonate, or other forms. Hydrolyzing 4'-phosphopantetheine sulfonate or S-sulfonate would forestall their conversion to inactive forms of CoA and acyl carrier protein. This is Pantothenate kinase 2 from Oryza sativa subsp. japonica (Rice).